The chain runs to 73 residues: UPF0435 protein lin1819 (73 aa).

Belongs to the UPF0435 family.

This is UPF0435 protein lin1819 from Listeria innocua serovar 6a (strain ATCC BAA-680 / CLIP 11262).